A 170-amino-acid chain; its full sequence is Protein-lysine myristoyltransferase HlyC (170 aa).

His23 is a catalytic residue. A heme-binding site is contributed by His151.

This sequence belongs to the RTX toxin acyltransferase family. Monomer. In terms of processing, proteolytically cleaved by the protease systems ClpAP, ClpXP and FtsH, leading to its degradation.

It is found in the cytoplasm. The catalysed reaction is tetradecanoyl-[ACP] + L-lysyl-[protein] = N(6)-tetradecanoyl-L-lysyl-[protein] + holo-[ACP] + H(+). Its activity is regulated as follows. The acyltransferase activity is inhibited by heme. Its function is as follows. Protein-lysine myristoyltransferase that catalyzes myristoylation of the protoxin (HlyA) at two internal lysine residues, thereby converting it to the active toxin. This chain is Protein-lysine myristoyltransferase HlyC, found in Escherichia coli.